A 119-amino-acid polypeptide reads, in one-letter code: MRQNKLIEKITASQLRDDIPEFRAGDTVRVHARIVEGSRERIQMFEGVVIKRHGAGISATYTVRKISNGVGVERTFPVHSPRVDKIDVLRYGRVRRAKLYYLRERTGKATRIAERRRDN.

It belongs to the bacterial ribosomal protein bL19 family.

In terms of biological role, this protein is located at the 30S-50S ribosomal subunit interface and may play a role in the structure and function of the aminoacyl-tRNA binding site. In Limosilactobacillus reuteri (strain DSM 20016) (Lactobacillus reuteri), this protein is Large ribosomal subunit protein bL19.